The primary structure comprises 57 residues: Large ribosomal subunit protein bL32 (57 aa).

This sequence belongs to the bacterial ribosomal protein bL32 family.

The chain is Large ribosomal subunit protein bL32 from Lysinibacillus sphaericus (strain C3-41).